The sequence spans 54 residues: UPF0391 membrane protein Pfl01_0044 (54 aa).

Helical transmembrane passes span 4–24 and 29–49; these read WAIT…GGIA and GIAK…FFFG.

The protein belongs to the UPF0391 family.

The protein resides in the cell membrane. In Pseudomonas fluorescens (strain Pf0-1), this protein is UPF0391 membrane protein Pfl01_0044.